The primary structure comprises 286 residues: Pantothenate synthetase (286 aa).

ATP is bound at residue 30–37 (MGNLHSGH). His37 acts as the Proton donor in catalysis. Gln61 is a binding site for (R)-pantoate. Gln61 contributes to the beta-alanine binding site. Position 149 to 152 (149 to 152 (GQKD)) interacts with ATP. Gln155 contributes to the (R)-pantoate binding site. ATP contacts are provided by residues Val178 and 186–189 (LSSR).

Belongs to the pantothenate synthetase family. Homodimer.

It localises to the cytoplasm. The catalysed reaction is (R)-pantoate + beta-alanine + ATP = (R)-pantothenate + AMP + diphosphate + H(+). It functions in the pathway cofactor biosynthesis; (R)-pantothenate biosynthesis; (R)-pantothenate from (R)-pantoate and beta-alanine: step 1/1. In terms of biological role, catalyzes the condensation of pantoate with beta-alanine in an ATP-dependent reaction via a pantoyl-adenylate intermediate. The chain is Pantothenate synthetase from Pseudomonas fluorescens (strain Pf0-1).